We begin with the raw amino-acid sequence, 459 residues long: Putrescine aminotransferase (459 aa).

Pyridoxal 5'-phosphate contacts are provided by residues 150 to 151 and Gln-274; that span reads GT. Lys-300 is modified (N6-(pyridoxal phosphate)lysine). Thr-332 contributes to the pyridoxal 5'-phosphate binding site.

Belongs to the class-III pyridoxal-phosphate-dependent aminotransferase family. Putrescine aminotransferase subfamily. It depends on pyridoxal 5'-phosphate as a cofactor.

It catalyses the reaction an alkane-alpha,omega-diamine + 2-oxoglutarate = an omega-aminoaldehyde + L-glutamate. It carries out the reaction putrescine + 2-oxoglutarate = 1-pyrroline + L-glutamate + H2O. The catalysed reaction is cadaverine + 2-oxoglutarate = 5-aminopentanal + L-glutamate. The protein operates within amine and polyamine degradation; putrescine degradation; 4-aminobutanal from putrescine (transaminase route): step 1/1. Its function is as follows. Catalyzes the aminotransferase reaction from putrescine to 2-oxoglutarate, leading to glutamate and 4-aminobutanal, which spontaneously cyclizes to form 1-pyrroline. This is the first step in one of two pathways for putrescine degradation, where putrescine is converted into 4-aminobutanoate (gamma-aminobutyrate or GABA) via 4-aminobutanal. Also functions as a cadaverine transaminase in a a L-lysine degradation pathway to succinate that proceeds via cadaverine, glutarate and L-2-hydroxyglutarate. The protein is Putrescine aminotransferase of Escherichia coli O8 (strain IAI1).